Reading from the N-terminus, the 312-residue chain is Ribosomal RNA small subunit methyltransferase H (312 aa).

Residues 34–36 (AGH), Asp-54, Phe-81, Asp-102, and Gln-109 each bind S-adenosyl-L-methionine.

Belongs to the methyltransferase superfamily. RsmH family.

It is found in the cytoplasm. It catalyses the reaction cytidine(1402) in 16S rRNA + S-adenosyl-L-methionine = N(4)-methylcytidine(1402) in 16S rRNA + S-adenosyl-L-homocysteine + H(+). Specifically methylates the N4 position of cytidine in position 1402 (C1402) of 16S rRNA. This Geobacter sp. (strain M21) protein is Ribosomal RNA small subunit methyltransferase H.